The following is a 268-amino-acid chain: Tryptophan synthase alpha chain (268 aa).

Active-site proton acceptor residues include E40 and D51.

Belongs to the TrpA family. As to quaternary structure, tetramer of two alpha and two beta chains.

The enzyme catalyses (1S,2R)-1-C-(indol-3-yl)glycerol 3-phosphate + L-serine = D-glyceraldehyde 3-phosphate + L-tryptophan + H2O. The protein operates within amino-acid biosynthesis; L-tryptophan biosynthesis; L-tryptophan from chorismate: step 5/5. In terms of biological role, the alpha subunit is responsible for the aldol cleavage of indoleglycerol phosphate to indole and glyceraldehyde 3-phosphate. The chain is Tryptophan synthase alpha chain from Geobacillus thermodenitrificans (strain NG80-2).